The following is a 316-amino-acid chain: N-acetylmuramic acid 6-phosphate etherase (316 aa).

An SIS domain is found at 68 to 231 (ITDRLRSGGR…STCAMVRLGK (164 aa)). Glutamate 96 functions as the Proton donor in the catalytic mechanism. Residue glutamate 127 is part of the active site.

The protein belongs to the GCKR-like family. MurNAc-6-P etherase subfamily. In terms of assembly, homodimer.

It catalyses the reaction N-acetyl-D-muramate 6-phosphate + H2O = N-acetyl-D-glucosamine 6-phosphate + (R)-lactate. It functions in the pathway amino-sugar metabolism; N-acetylmuramate degradation. Specifically catalyzes the cleavage of the D-lactyl ether substituent of MurNAc 6-phosphate, producing GlcNAc 6-phosphate and D-lactate. The chain is N-acetylmuramic acid 6-phosphate etherase from Prochlorococcus marinus (strain MIT 9303).